Consider the following 368-residue polypeptide: Ferredoxin--NADP reductase 2 (368 aa).

FAD contacts are provided by Asp-57, Gln-65, Tyr-70, Val-110, Phe-145, Asp-310, and Thr-351.

It belongs to the ferredoxin--NADP reductase type 2 family. Homodimer. The cofactor is FAD.

It catalyses the reaction 2 reduced [2Fe-2S]-[ferredoxin] + NADP(+) + H(+) = 2 oxidized [2Fe-2S]-[ferredoxin] + NADPH. This chain is Ferredoxin--NADP reductase 2, found in Cupriavidus pinatubonensis (strain JMP 134 / LMG 1197) (Cupriavidus necator (strain JMP 134)).